Here is a 175-residue protein sequence, read N- to C-terminus: UPF0398 protein SPD_0338 (175 aa).

The protein belongs to the UPF0398 family.

This chain is UPF0398 protein SPD_0338, found in Streptococcus pneumoniae serotype 2 (strain D39 / NCTC 7466).